We begin with the raw amino-acid sequence, 189 residues long: Crossover junction endodeoxyribonuclease RuvC (189 aa).

Residues Asp7, Glu68, and Asp141 contribute to the active site. 3 residues coordinate Mg(2+): Asp7, Glu68, and Asp141.

It belongs to the RuvC family. Homodimer which binds Holliday junction (HJ) DNA. The HJ becomes 2-fold symmetrical on binding to RuvC with unstacked arms; it has a different conformation from HJ DNA in complex with RuvA. In the full resolvosome a probable DNA-RuvA(4)-RuvB(12)-RuvC(2) complex forms which resolves the HJ. Requires Mg(2+) as cofactor.

It is found in the cytoplasm. It carries out the reaction Endonucleolytic cleavage at a junction such as a reciprocal single-stranded crossover between two homologous DNA duplexes (Holliday junction).. Functionally, the RuvA-RuvB-RuvC complex processes Holliday junction (HJ) DNA during genetic recombination and DNA repair. Endonuclease that resolves HJ intermediates. Cleaves cruciform DNA by making single-stranded nicks across the HJ at symmetrical positions within the homologous arms, yielding a 5'-phosphate and a 3'-hydroxyl group; requires a central core of homology in the junction. The consensus cleavage sequence is 5'-(A/T)TT(C/G)-3'. Cleavage occurs on the 3'-side of the TT dinucleotide at the point of strand exchange. HJ branch migration catalyzed by RuvA-RuvB allows RuvC to scan DNA until it finds its consensus sequence, where it cleaves and resolves the cruciform DNA. This chain is Crossover junction endodeoxyribonuclease RuvC, found in Rhodococcus opacus (strain B4).